The following is a 512-amino-acid chain: Maturase K (512 aa).

The protein belongs to the intron maturase 2 family. MatK subfamily.

Its subcellular location is the plastid. The protein resides in the chloroplast. Its function is as follows. Usually encoded in the trnK tRNA gene intron. Probably assists in splicing its own and other chloroplast group II introns. The polypeptide is Maturase K (Daucus carota (Wild carrot)).